A 158-amino-acid polypeptide reads, in one-letter code: 2-C-methyl-D-erythritol 2,4-cyclodiphosphate synthase (158 aa).

D8 and H10 together coordinate a divalent metal cation. Residues 8-10 (DAH) and 34-35 (HS) contribute to the 4-CDP-2-C-methyl-D-erythritol 2-phosphate site. An a divalent metal cation-binding site is contributed by H42. 4-CDP-2-C-methyl-D-erythritol 2-phosphate contacts are provided by residues 56–58 (DIG), 132–135 (TTTE), and R142.

It belongs to the IspF family. As to quaternary structure, homotrimer. A divalent metal cation is required as a cofactor.

It catalyses the reaction 4-CDP-2-C-methyl-D-erythritol 2-phosphate = 2-C-methyl-D-erythritol 2,4-cyclic diphosphate + CMP. It participates in isoprenoid biosynthesis; isopentenyl diphosphate biosynthesis via DXP pathway; isopentenyl diphosphate from 1-deoxy-D-xylulose 5-phosphate: step 4/6. Functionally, involved in the biosynthesis of isopentenyl diphosphate (IPP) and dimethylallyl diphosphate (DMAPP), two major building blocks of isoprenoid compounds. Catalyzes the conversion of 4-diphosphocytidyl-2-C-methyl-D-erythritol 2-phosphate (CDP-ME2P) to 2-C-methyl-D-erythritol 2,4-cyclodiphosphate (ME-CPP) with a corresponding release of cytidine 5-monophosphate (CMP). The polypeptide is 2-C-methyl-D-erythritol 2,4-cyclodiphosphate synthase (Nitrosococcus oceani (strain ATCC 19707 / BCRC 17464 / JCM 30415 / NCIMB 11848 / C-107)).